A 155-amino-acid polypeptide reads, in one-letter code: Aspartate carbamoyltransferase regulatory chain (155 aa).

The Zn(2+) site is built by Cys113, Cys118, Cys139, and Cys142.

It belongs to the PyrI family. As to quaternary structure, contains catalytic and regulatory chains. Requires Zn(2+) as cofactor.

Involved in allosteric regulation of aspartate carbamoyltransferase. In Methanospirillum hungatei JF-1 (strain ATCC 27890 / DSM 864 / NBRC 100397 / JF-1), this protein is Aspartate carbamoyltransferase regulatory chain.